Here is a 447-residue protein sequence, read N- to C-terminus: Hydroxymethylglutaryl-CoA synthase (447 aa).

Glu-86 functions as the Proton donor/acceptor in the catalytic mechanism. Residue Cys-118 is the Acyl-thioester intermediate of the active site. The (3S)-3-hydroxy-3-methylglutaryl-CoA site is built by Cys-118, Asn-156, Thr-160, Ser-210, His-250, Lys-259, Asn-327, and Ser-361. The active-site Proton donor/acceptor is His-250. Thr-398 is subject to Phosphothreonine.

Belongs to the thiolase-like superfamily. HMG-CoA synthase family.

It catalyses the reaction acetoacetyl-CoA + acetyl-CoA + H2O = (3S)-3-hydroxy-3-methylglutaryl-CoA + CoA + H(+). Its pathway is metabolic intermediate biosynthesis; (R)-mevalonate biosynthesis; (R)-mevalonate from acetyl-CoA: step 2/3. Functionally, hydroxymethylglutaryl-CoA synthase; part of the first module of ergosterol biosynthesis pathway that includes the early steps of the pathway, conserved across all eukaryotes, and which results in the formation of mevalonate from acetyl-coenzyme A (acetyl-CoA). Hcs1 condenses acetyl-CoA with acetoacetyl-CoA to form hydroxymethylglutaryl-CoA (HMG-CoA). The first module starts with the action of the cytosolic acetyl-CoA acetyltransferase eg10 that catalyzes the formation of acetoacetyl-CoA. The hydroxymethylglutaryl-CoA synthases erg13 then condenses acetyl-CoA with acetoacetyl-CoA to form HMG-CoA. The rate-limiting step of the early module is the reduction to mevalonate by the 3-hydroxy-3-methylglutaryl-coenzyme A (HMG-CoA) reductases hcs1. This Schizosaccharomyces pombe (strain 972 / ATCC 24843) (Fission yeast) protein is Hydroxymethylglutaryl-CoA synthase.